A 207-amino-acid chain; its full sequence is Protein lin-7 homolog B (207 aa).

Positions 1–13 (MAALVEPLGLERD) match the Kinase interacting site motif. The L27 domain maps to 10–65 (LERDVSRAVELLERLQRSGELPPQKLQALQRVLQSRFCSAIREVYEQLYDTLDITG). In terms of domain architecture, PDZ spans 93 to 175 (VVELPKTDEG…SVKLVVRYTP (83 aa)). A disordered region spans residues 187–207 (KMRSARRRQQHHSYSSLESRG). Over residues 198-207 (HSYSSLESRG) the composition is skewed to polar residues.

Belongs to the lin-7 family. As to quaternary structure, forms two exclusive ternary complexes with CASK and CASKIN1. The brain-specific heterotrimeric complex (LIN-10-LIN-2-LIN-7 complex) composed of at least APBA1, CASK, and LIN7, associates with the motor protein KIF17 to transport vesicles along microtubules. Forms a heterotrimeric complex composed of MMP5, LIN7B and PATJ; the N-terminal L27 domain of PALS1 interacts with the L27 domain of PATJ and the C-terminal L27 domain of PALS1 interacts with the L27 domain of LIN7B. Forms a heterotrimeric complex with DLG1 and CASK via their L27 domains. Interacts with DLG4 and GRIN2B as well as CDH1 and CTNNB1, the channels KCNJ12/Kir2.2, KCNJ4/Kir2.3 and probably KCNJ2/Kir2.1 and SLC6A12/BGT-1 via its PDZ domain. The association of LIN7A with cadherin and beta-catenin is calcium-dependent, occurs at synaptic junctions and requires the actin cytoskeleton. Interacts with EGFR, ERBB2, ERBB3 and ERBB4 with both PDZ and KID domains. Associates with KIF17 via APBA1. Interacts with ASIC3. Interacts with TOPK. Interacts with RTKN. Interacts with APBA1. Interacts with MPP7. Interacts with DLG2. Interacts with DLG3. Expressed only in brain.

It localises to the cell membrane. The protein resides in the basolateral cell membrane. Its subcellular location is the cell junction. The protein localises to the postsynaptic density membrane. It is found in the tight junction. Its function is as follows. Plays a role in establishing and maintaining the asymmetric distribution of channels and receptors at the plasma membrane of polarized cells. Forms membrane-associated multiprotein complexes that may regulate delivery and recycling of proteins to the correct membrane domains. The tripartite complex composed of LIN7 (LIN7A, LIN7B or LIN7C), CASK and APBA1 associates with the motor protein KIF17 to transport vesicles containing N-methyl-D-aspartate (NMDA) receptor subunit NR2B along microtubules. This complex may have the potential to couple synaptic vesicle exocytosis to cell adhesion in brain. Ensures the proper localization of GRIN2B (subunit 2B of the NMDA receptor) to neuronal postsynaptic density and may function in localizing synaptic vesicles at synapses where it is recruited by beta-catenin and cadherin. Required to localize Kir2 channels, GABA transporter (SLC6A12) and EGFR/ERBB1, ERBB2, ERBB3 and ERBB4 to the basolateral membrane of epithelial cells. May increase the amplitude of ASIC3 acid-evoked currents by stabilizing the channel at the cell surface. The protein is Protein lin-7 homolog B (Lin7b) of Rattus norvegicus (Rat).